The following is a 493-amino-acid chain: Dipeptide permease D (493 aa).

Residues 1–13 lie on the Cytoplasmic side of the membrane; that stretch reads MNKHASQPRAIYY. The helical transmembrane segment at 14 to 34 threads the bilayer; the sequence is VVALQIWEYFSFYGMRALLIL. Residues 35–48 lie on the Periplasmic side of the membrane; that stretch reads YLTNQLKYNDTHAY. A helical membrane pass occupies residues 49 to 69; sequence ELFSAYCSLVYVTPILGGFLA. Residues 70 to 77 are Cytoplasmic-facing; sequence DKVLGNRM. The helical transmembrane segment at 78-98 threads the bilayer; that stretch reads AVMLGALLMAIGHVVLGASEI. Residues 99–100 are Periplasmic-facing; the sequence is HP. Residues 101–121 traverse the membrane as a helical segment; it reads SFLYLSLAIIVCGYGLFKSNV. Residues 122–137 lie on the Cytoplasmic side of the membrane; the sequence is SCLLGELYEPTDPRRD. A helical membrane pass occupies residues 138–158; that stretch reads GGFSLMYAAGNVGSIIAPIAC. The Periplasmic segment spans residues 159 to 166; sequence GYAQEEYS. Residues 167–187 form a helical membrane-spanning segment; sequence WAMGFGLAAVGMIAGLVIFLC. Topologically, residues 188–211 are cytoplasmic; it reads GNRHFTHTRGVNKKVLRATNFLLP. A helical transmembrane segment spans residues 212–232; the sequence is NWGWLLVLLVATPALITILFW. Residues 233 to 234 lie on the Periplasmic side of the membrane; it reads KE. A helical membrane pass occupies residues 235–255; that stretch reads WSVYALIVATIIGLGVLAKIY. Topologically, residues 256-266 are cytoplasmic; the sequence is RKAENQKQRKE. The helical transmembrane segment at 267–287 threads the bilayer; that stretch reads LGLIVTLTFFSMLFWAFAQQG. The Periplasmic segment spans residues 288-311; it reads GSSISLYIDRFVNRDMFGYTVPTA. The helical transmembrane segment at 312–332 threads the bilayer; the sequence is MFQSINAFAVMLCGVFLAWVV. Residues 333–343 are Cytoplasmic-facing; sequence KESVAGNRTVR. The chain crosses the membrane as a helical span at residues 344–364; the sequence is IWGKFALGLGLMSAGFCILTL. The Periplasmic portion of the chain corresponds to 365–378; the sequence is SARWSAMYGHSSLP. Residues 379 to 399 form a helical membrane-spanning segment; it reads LMVLGLAVMGFAELFIDPVAM. Topologically, residues 400 to 412 are cytoplasmic; sequence SQITRIEIPGVTG. The chain crosses the membrane as a helical span at residues 413-433; the sequence is VLTGIYMLLSGAIANYLAGVI. Residues 434 to 461 are Periplasmic-facing; that stretch reads ADQTSQASFDASGAINYSINAYIEVFDQ. Residues 462–482 form a helical membrane-spanning segment; the sequence is ITWGALACVGLVLMIWLYQAL. Residues 483-493 are Cytoplasmic-facing; it reads KFRNRALALES.

This sequence belongs to the major facilitator superfamily. Proton-dependent oligopeptide transporter (POT/PTR) (TC 2.A.17) family. DtpD subfamily.

Its subcellular location is the cell inner membrane. In terms of biological role, probable proton-dependent permease that transports dipeptides. The polypeptide is Dipeptide permease D (dtpD) (Escherichia coli (strain K12)).